A 662-amino-acid chain; its full sequence is UvrABC system protein B (662 aa).

The Helicase ATP-binding domain occupies 25–182; that stretch reads KGIEKREKFQ…KKLVEIQYER (158 aa). Residue 38 to 45 coordinates ATP; that stretch reads GVTGSGKT. A Beta-hairpin motif is present at residues 91–114; it reads YYDYYQPEAYVAQSDTYIEKDASI. The region spanning 429-595 is the Helicase C-terminal domain; sequence QIDDLYTSIQ…TIIKDIREVI (167 aa). Residues 622-657 enclose the UVR domain; sequence DKLIEKYEEEMKEAAQNLQFEKAAHLRDVIYKLKKD.

Belongs to the UvrB family. Forms a heterotetramer with UvrA during the search for lesions. Interacts with UvrC in an incision complex.

It localises to the cytoplasm. In terms of biological role, the UvrABC repair system catalyzes the recognition and processing of DNA lesions. A damage recognition complex composed of 2 UvrA and 2 UvrB subunits scans DNA for abnormalities. Upon binding of the UvrA(2)B(2) complex to a putative damaged site, the DNA wraps around one UvrB monomer. DNA wrap is dependent on ATP binding by UvrB and probably causes local melting of the DNA helix, facilitating insertion of UvrB beta-hairpin between the DNA strands. Then UvrB probes one DNA strand for the presence of a lesion. If a lesion is found the UvrA subunits dissociate and the UvrB-DNA preincision complex is formed. This complex is subsequently bound by UvrC and the second UvrB is released. If no lesion is found, the DNA wraps around the other UvrB subunit that will check the other stand for damage. The sequence is that of UvrABC system protein B from Clostridium botulinum (strain Kyoto / Type A2).